Here is a 238-residue protein sequence, read N- to C-terminus: Aspirochlorine biosynthesis protein N (238 aa).

This sequence belongs to the asaB hydroxylase/desaturase family.

Its pathway is mycotoxin biosynthesis. In terms of biological role, part of the gene cluster that mediates the biosynthesis of aspirochlorine (or antibiotic A30641), an unusual halogenated spiro compound with distinctive antifungal properties due to selective inhibition of protein biosynthesis, and which is also active against bacteria, viruses, and murine tumor cells. The non-ribosomal peptide synthetase (NRPS) aclP is responsible the formation of the diketopiperazine (DKP) core from the condensation of 2 phenylalanine residues. One Phe residue is tailored into chlorotyrosine by hydroxylation and chlorination, whereas the second Phe undergoes an unprecedented C-C bond cleavage to be converted into glycine. After formation of the DKP, sulfur is incorporated into the DKP by conjugation with glutathione by aclG, followed by its stepwise degradation to the thiol by aclI, aclJ and aclK, and the dithiol oxidation by aclT. In addition, oxygenases (aclB, aclC, aclL and aclO) and O-methyltransferases (aclM and aclU) act as tailoring enzymes to produce the intermediate dechloroaspirochlorine. Ultimately, chlorination of dechloroaspirochlorine by the halogenase aclH is the last step in the aspirochlorine pathway. The sequence is that of Aspirochlorine biosynthesis protein N from Aspergillus oryzae (strain ATCC 42149 / RIB 40) (Yellow koji mold).